Reading from the N-terminus, the 397-residue chain is uncharacterized protein (397 aa).

The next 10 helical transmembrane spans lie at 2–24, 44–66, 92–114, 124–143, 150–169, 173–195, 255–277, 297–319, 331–350, and 354–373; these read LNLL…PGIH, YIPF…SAFL, AIVL…SLFL, AFYC…FILY, SVWE…AVLY, AFNI…INNL, FIVS…VIFI, INTA…LNLS, FKFL…IIGS, and YLIY…LLAV.

The protein resides in the cell membrane. This is an uncharacterized protein from Methanocaldococcus jannaschii (strain ATCC 43067 / DSM 2661 / JAL-1 / JCM 10045 / NBRC 100440) (Methanococcus jannaschii).